The following is a 143-amino-acid chain: ATP synthase subunit b' (143 aa).

A helical transmembrane segment spans residues 6–26 (ATLPFMALQFLLLAAVLNAIF).

The protein belongs to the ATPase B chain family. In terms of assembly, F-type ATPases have 2 components, F(1) - the catalytic core - and F(0) - the membrane proton channel. F(1) has five subunits: alpha(3), beta(3), gamma(1), delta(1), epsilon(1). F(0) has four main subunits: a(1), b(1), b'(1) and c(10-14). The alpha and beta chains form an alternating ring which encloses part of the gamma chain. F(1) is attached to F(0) by a central stalk formed by the gamma and epsilon chains, while a peripheral stalk is formed by the delta, b and b' chains.

Its subcellular location is the cellular thylakoid membrane. In terms of biological role, f(1)F(0) ATP synthase produces ATP from ADP in the presence of a proton or sodium gradient. F-type ATPases consist of two structural domains, F(1) containing the extramembraneous catalytic core and F(0) containing the membrane proton channel, linked together by a central stalk and a peripheral stalk. During catalysis, ATP synthesis in the catalytic domain of F(1) is coupled via a rotary mechanism of the central stalk subunits to proton translocation. Its function is as follows. Component of the F(0) channel, it forms part of the peripheral stalk, linking F(1) to F(0). The b'-subunit is a diverged and duplicated form of b found in plants and photosynthetic bacteria. The sequence is that of ATP synthase subunit b' from Nostoc punctiforme (strain ATCC 29133 / PCC 73102).